A 187-amino-acid chain; its full sequence is Orotate phosphoribosyltransferase (187 aa).

Position 110–118 (110–118 (EDVVTTGGS)) interacts with 5-phospho-alpha-D-ribose 1-diphosphate. Residues Thr-114 and Arg-142 each contribute to the orotate site.

It belongs to the purine/pyrimidine phosphoribosyltransferase family. PyrE subfamily. Homodimer. It depends on Mg(2+) as a cofactor.

The enzyme catalyses orotidine 5'-phosphate + diphosphate = orotate + 5-phospho-alpha-D-ribose 1-diphosphate. Its pathway is pyrimidine metabolism; UMP biosynthesis via de novo pathway; UMP from orotate: step 1/2. Catalyzes the transfer of a ribosyl phosphate group from 5-phosphoribose 1-diphosphate to orotate, leading to the formation of orotidine monophosphate (OMP). The chain is Orotate phosphoribosyltransferase from Thermotoga maritima (strain ATCC 43589 / DSM 3109 / JCM 10099 / NBRC 100826 / MSB8).